The sequence spans 306 residues: Recombination-associated protein RdgC (306 aa).

It belongs to the RdgC family.

The protein resides in the cytoplasm. Its subcellular location is the nucleoid. Functionally, may be involved in recombination. The sequence is that of Recombination-associated protein RdgC from Pseudomonas entomophila (strain L48).